Here is a 229-residue protein sequence, read N- to C-terminus: MSSSNRELVIDFVSYKLSQRGHCWSELEEEDENRTDTAAEAEMDSVLNGSPSWHPPAGHVVNGATVHRSSLEVHEIVRASDVRQALRDAGDEFELRYRRAFSDLTSQLHITPGTAYQSFEQVVNELFHDGVNWGRIVAFFSFGGALCVESVDKEMRVLVGRIVSWMTTYLTDHLDPWIQENGGWERFVDLYGNNAAAELRKGQETFNKWLLTGATVAGVLLLGSLLSRK.

Positions 4–24 (SNRELVIDFVSYKLSQRGHCW) match the BH4 motif. The short motif at 82-96 (VRQALRDAGDEFELR) is the BH3 element. Residues 125–144 (ELFHDGVNWGRIVAFFSFGG) carry the BH1 motif. Positions 176 to 191 (PWIQENGGWERFVDLY) match the BH2 motif. The helical transmembrane segment at 206 to 223 (FNKWLLTGATVAGVLLLG) threads the bilayer.

Belongs to the Bcl-2 family. In terms of tissue distribution, highest expression in organs with lymphoid development.

The protein resides in the mitochondrion membrane. It is found in the nucleus membrane. It localises to the mitochondrion matrix. Its subcellular location is the cytoplasm. The protein localises to the cytoskeleton. The protein resides in the microtubule organizing center. It is found in the centrosome. It localises to the cytosol. Its subcellular location is the cytoplasmic vesicle. The protein localises to the secretory vesicle. The protein resides in the synaptic vesicle membrane. Dominant regulator of apoptotic cell death. The long form displays cell death repressor activity, whereas the short isoform promotes apoptosis. Also acts as a regulator of G2 checkpoint and progression to cytokinesis during mitosis. This chain is Bcl-2-like protein 1 (BCL2L1), found in Gallus gallus (Chicken).